Consider the following 282-residue polypeptide: Biotin synthase (282 aa).

The Radical SAM core domain occupies 1–228; sequence MQEIFLCSIS…NARLMVAGGR (228 aa). [4Fe-4S] cluster-binding residues include Cys17, Cys21, and Cys24. Positions 61, 96, 154, and 221 each coordinate [2Fe-2S] cluster.

This sequence belongs to the radical SAM superfamily. Biotin synthase family. As to quaternary structure, homodimer. [4Fe-4S] cluster serves as cofactor. [2Fe-2S] cluster is required as a cofactor.

It carries out the reaction (4R,5S)-dethiobiotin + (sulfur carrier)-SH + 2 reduced [2Fe-2S]-[ferredoxin] + 2 S-adenosyl-L-methionine = (sulfur carrier)-H + biotin + 2 5'-deoxyadenosine + 2 L-methionine + 2 oxidized [2Fe-2S]-[ferredoxin]. It participates in cofactor biosynthesis; biotin biosynthesis; biotin from 7,8-diaminononanoate: step 2/2. Its function is as follows. Catalyzes the conversion of dethiobiotin (DTB) to biotin by the insertion of a sulfur atom into dethiobiotin via a radical-based mechanism. The polypeptide is Biotin synthase (Helicobacter pylori (strain J99 / ATCC 700824) (Campylobacter pylori J99)).